The primary structure comprises 266 residues: Phosphatidylglycerol--prolipoprotein diacylglyceryl transferase (266 aa).

7 helical membrane passes run 10–30 (VALA…LIGI), 56–76 (LVFW…VLFY), 92–112 (WKGG…VWWF), 120–140 (FFQL…AGRI), 171–191 (PSQL…LWLF), 199–219 (ASVS…VEFV), and 233–253 (WLTM…ALMV). R139 provides a ligand contact to a 1,2-diacyl-sn-glycero-3-phospho-(1'-sn-glycerol).

The protein belongs to the Lgt family.

It is found in the cell inner membrane. It catalyses the reaction L-cysteinyl-[prolipoprotein] + a 1,2-diacyl-sn-glycero-3-phospho-(1'-sn-glycerol) = an S-1,2-diacyl-sn-glyceryl-L-cysteinyl-[prolipoprotein] + sn-glycerol 1-phosphate + H(+). It functions in the pathway protein modification; lipoprotein biosynthesis (diacylglyceryl transfer). Catalyzes the transfer of the diacylglyceryl group from phosphatidylglycerol to the sulfhydryl group of the N-terminal cysteine of a prolipoprotein, the first step in the formation of mature lipoproteins. The polypeptide is Phosphatidylglycerol--prolipoprotein diacylglyceryl transferase (Pseudomonas aeruginosa (strain LESB58)).